A 3119-amino-acid chain; its full sequence is MATLEKLMKAFESLKSFQQQQQQQPPPQAPPPPPPPPPQPPQPPPQGQPPPPPPPLPGPAEEPLHRPKKELSATKKDRVNHCLTICENIVAQSLRNSPEFQKLLGIAMELFLLCSNDAESDVRMVADECLNKVIKALMDSNLPRLQLELYKEIKKNGAPRSLRAALWRFAELAHLVRPQKCRPYLVNLLPCLTRTSKRPEESVQETLAAAVPKIMASFGNFANDNEIKVLLKAFIANLKSSSPTVRRTAAGSAVSICQHSRRTQYFYNWLLNVLLGLLVPMEEEHSTLLILGVLLTLRCLVPLLQQQVKDTSLKGSFGVTRKEMEVSPSTEQLVQVYELTLHHTQHQDHNVVTGALELLQQLFRTPPPELLQALTTPGGLGQLTLVQEEARGRGRSGSIVELLAGGGSSCSPVLSRKQKGKVLLGEEEALEDDSESRSDVSSSAFAASVKSEIGGELAASSGVSTPGSVGHDIITEQPRSQHTLQADSVDLSGCDLTSAATDGDEEDILSHSSSQFSAVPSDPAMDLNDGTQASSPISDSSQTTTEGPDSAVTPSDSSEIVLDGADSQYLGMQIGQPQEDDEEGAAGVLSGEVSDVFRNSSLALQQAHLLERMGHSRQPSDSSIDKYVTRDEVAEASDPESKPCRIKGDIGQPNDDDSAPLVHCVRLLSASFLLTGEKKALVPDRDVRVSVKALALSCIGAAVALHPESFFSRLYKVPLNTTESTEEQYVSDILNYIDHGDPQVRGATAILCGTLVYSILSRSRLRVGDWLGNIRTLTGNTFSLVDCIPLLQKTLKDESSVTCKLACTAVRHCVLSLCSSSYSDLGLQLLIDMLPLKNSSYWLVRTELLDTLAEIDFRLVSFLEAKAESLHRGAHHYTGFLKLQERVLNNVVIYLLGDEDPRVRHVAATSLTRLVPKLFYKCDQGQADPVVAVARDQSSVYLKLLMHETQPPSHFSVSTITRIYRGYSLLPSITDVTMENNLSRVVAAVSHELITSTTRALTFGCCEALCLLSAAFPVCTWSLGWHCGVPPLSASDESRKSCTVGMASMILTLLSSAWFPLDLSAHQDALILAGNLLAASAPKSLRSSWTSEEEANSAATRQEEIWPALGDRTLVPLVEQLFSHLLKVINICAHVLDDVTPGPAIKAALPSLTNPPSLSPIRRKGKEKEPGEQASTPMSPKKVGEASAASRQSDTSGPVTASKSSSLGSFYHLPSYLKLHDVLKATHANYKVTLDLQNSTEKFGGFLRSALDVLSQILELATLQDIGKCVEEVLGYLKSCFSREPMMATVCVQQLLKTLFGTNLASQFDGLSSNPSKSQCRAQRLGSSSVRPGLYHYCFMAPYTHFTQALADASLRNMVQAEQERDASGWFDVLQKVSAQLKTNLTSVTKNRADKNAIHNHIRLFEPLVIKALKQYTTTTSVQLQKQVLDLLAQLVQLRVNYCLLDSDQVFIGFVLKQFEYIEVGQFRESEAIIPNIFFFLVLLSYERYHSKQIIGIPKIIQLCDGIMASGRKAVTHAIPALQPIVHDLFVLRGTNKADAGKELETQKEVVVSMLLRLIQYHQVLEMFILVLQQCHKENEDKWKRLSRQVADIILPMLAKQQMHIDSHEALGVLNTLFEILAPSSLRPVDMLLRSMFITPSTMASVSTVQLWISGILAILRVLISQSTEDIVLCRIQELSFSPHLLSCPVINRLRGGGGNVTLGECSEGKQKSLPEDTFSRFLLQLVGILLEDIVTKQLKVDMSEQQHTFYCQELGTLLMCLIHIFKSGMFRRITAAATRLFTSDGCEGSFYTLESLNARVRSMVPTHPALVLLWCQILLLINHTDHRWWAEVQQTPKRHSLSCTKSLNPQKSGEEEDSGSAAQLGMCNREIVRRGALILFCDYVCQNLHDSEHLTWLIVNHIQDLISLSHEPPVQDFISAIHRNSAASGLFIQAIQSRCENLSTPTTLKKTLQCLEGIHLSQSGAVLTLYVDRLLGTPFRALARMVDTLACRRVEMLLAANLQSSMAQLPEEELNRIQEHLQNSGLAQRHQRLYSLLDRFRLSTVQDSLSPLPPVTSHPLDGDGHTSLETVSPDKDWYLQLVRSQCWTRSDSALLEGAELVNRIPAEDMNDFMMSSEFNLSLLAPCLSLGMSEIANGQKSPLFEAARGVILNRVTSVVQQLPAVHQVFQPFLPIEPTAYWNKLNDLLGDTTSYQSLTILARALAQYLVVLSKVPAHLHLPPEKEGDTVKFVVMTVEALSWHLIHEQIPLSLDLQAGLDCCCLALQVPGLWGVLSSPEYVTHACSLIHCVRFILEAIAVQPGDQLLGPESRSHTPRAVRKEEVDSDIQNLSHVTSACEMVADMVESLQSVLALGHKRNSTLPSFLTAVLKNIVISLARLPLVNSYTRVPPLVWKLGWSPKPGGDFGTVFPEIPVEFLQEKEILKEFIYRINTLGWTNRTQFEETWATLLGVLVTQPLVMEQEESPPEEDTERTQIHVLAVQAITSLVLSAMTVPVAGNPAVSCLEQQPRNKPLKALDTRFGRKLSMIRGIVEQEIQEMVSQRENTATHHSHQAWDPVPSLLPATTGALISHDKLLLQINPEREPGNMSYKLGQVSIHSVWLGNNITPLREEEWDEEEEEESDVPAPTSPPVSPVNSRKHRAGVDIHSCSQFLLELYSRWILPSSAARRTPVILISEVVRSLLVVSDLFTERTQFEMMYLTLTELRRVHPSEDEILIQYLVPATCKAAAVLGMDKTVAEPVSRLLESTLRSSHLPSQIGALHGILYVLECDLLDDTAKQLIPVVSDYLLSNLKGIAHCVNIHSQQHVLVMCATAFYLMENYPLDVGPEFSASVIQMCGVMLSGSEESTPSIIYHCALRGLERLLLSEQLSRLDTESLVKLSVDRVNVQSPHRAMAALGLMLTCMYTGKEKASPGRASDPSPATPDSESVIVAMERVSVLFDRIRKGFPCEARVVARILPQFLDDFFPPQDVMNKVIGEFLSNQQPYPQFMATVVYKVFQTLHSAGQSSMVRDWVMLSLSNFTQRTPVAMAMWSLSCFLVSASTSPWVSAILPHVISRMGKLEQVDVNLFCLVATDFYRHQIEEEFDRRAFQSVFEVVAAPGSPYHRLLACLQNVHKVTTC.

The interval 1–65 (MATLEKLMKA…LPGPAEEPLH (65 aa)) is disordered. Lys-9 carries the N6-acetyllysine modification. The span at 24–60 (QPPPQAPPPPPPPPPQPPQPPPQGQPPPPPPPLPGPA) shows a compositional bias: pro residues. 2 positions are modified to N6-acetyllysine: Lys-155 and Lys-213. HEAT repeat units follow at residues 183-220 (PYLV…SFGN) and 225-262 (NEIK…HSRR). Lys-322 bears the N6-acetyllysine mark. A phosphoserine mark is found at Ser-396, Ser-398, and Ser-411. An N6-acetyllysine modification is found at Lys-421. The segment at 470–481 (GHDIITEQPRSQ) is interaction with ZDHHC17. Residues 495–558 (DLTSAATDGD…DSAVTPSDSS (64 aa)) are disordered. The segment covering 529–558 (DGTQASSPISDSSQTTTEGPDSAVTPSDSS) has biased composition (polar residues). The N-myristoyl glycine moiety is linked to residue Gly-530. 2 positions are modified to phosphoserine: Ser-620 and Ser-623. HEAT repeat units lie at residues 782-819 (FSLV…SLCS) and 882-920 (KLQE…KLFY). Residues 1146–1204 (KAALPSLTNPPSLSPIRRKGKEKEPGEQASTPMSPKKVGEASAASRQSDTSGPVTASKS) form a disordered region. Low complexity predominate over residues 1149-1160 (LPSLTNPPSLSP). 2 positions are modified to phosphoserine; by CDK5: Ser-1159 and Ser-1179. Residues 1189–1204 (ASRQSDTSGPVTASKS) are compositionally biased toward polar residues. One copy of the HEAT 5 repeat lies at 1404 to 1441 (LFEPLVIKALKQYTTTTSVQLQKQVLDLLAQLVQLRVN). At Ser-1853 the chain carries Phosphoserine. Residues 2372–2381 (IVISLARLPL) carry the Nuclear export signal motif. Residues 2610–2637 (EEEWDEEEEEESDVPAPTSPPVSPVNSR) are disordered. Acidic residues predominate over residues 2611-2622 (EEWDEEEEEESD).

Belongs to the huntingtin family. As to quaternary structure, interacts with PFN1. Interacts through its N-terminus with PRPF40A. Interacts with PQBP1. Interacts with SETD2. Interacts with SH3GLB1. Interacts with SYVN. Interacts with TPR; the interaction is inhibited by forms of Huntingtin with expanded polyglutamine stretch. Interacts with ZDHHC13 (via ANK repeats). Interacts with ZDHHC17 (via ANK repeats). Interacts with F8A1/F8A2/F8A3. Found in a complex with F8A1/F8A2/F8A3, HTT and RAB5A; mediates the recruitment of HTT by RAB5A. Post-translationally, phosphorylation at Ser-1159 and Ser-1179 by CDK5 in response to DNA damage in nuclei of neurons protects neurons against polyglutamine expansion as well as DNA damage mediated toxicity. Cleaved by caspases downstream of the polyglutamine stretch. In terms of processing, myristoylated at Gly-530, following proteolytic cleavage at Asp-529. As to expression, the highest level is seen throughout the brain, but it is also found in the stomach, heart, testis, adipose tissue, muscle, spleen, liver, and kidney.

The protein resides in the cytoplasm. Its subcellular location is the nucleus. It localises to the cytoplasmic vesicle. It is found in the autophagosome. Its function is as follows. May play a role in microtubule-mediated transport or vesicle function. Promotes the formation of autophagic vesicles. This is Huntingtin (Htt) from Mus musculus (Mouse).